Consider the following 261-residue polypeptide: Kallikrein-1 (261 aa).

The first 18 residues, 1 to 18 (MRFLILFLALSLGGIDAA), serve as a signal peptide directing secretion. The propeptide at 19–24 (PPVQSR) is activation peptide. In terms of domain architecture, Peptidase S1 spans 25-258 (IVGGFNCEKN…FNTWIRETMA (234 aa)). 5 disulfides stabilise this stretch: cysteine 31–cysteine 173, cysteine 50–cysteine 66, cysteine 152–cysteine 219, cysteine 184–cysteine 198, and cysteine 209–cysteine 234. Histidine 65 (charge relay system) is an active-site residue. The N-linked (GlcNAc...) asparagine glycan is linked to asparagine 102. Catalysis depends on aspartate 120, which acts as the Charge relay system. Serine 213 acts as the Charge relay system in catalysis.

The protein belongs to the peptidase S1 family. Kallikrein subfamily.

The catalysed reaction is Preferential cleavage of Arg-|-Xaa bonds in small molecule substrates. Highly selective action to release kallidin (lysyl-bradykinin) from kininogen involves hydrolysis of Met-|-Xaa or Leu-|-Xaa.. Its function is as follows. Glandular kallikreins cleave Met-Lys and Arg-Ser bonds in kininogen to release Lys-bradykinin. This Mus musculus (Mouse) protein is Kallikrein-1 (Klk1).